A 341-amino-acid chain; its full sequence is GTP 3',8-cyclase (341 aa).

Positions 11–231 (KRERPLRDLR…DLINQHMPTE (221 aa)) constitute a Radical SAM core domain. Arginine 20 provides a ligand contact to GTP. Positions 27 and 31 each coordinate [4Fe-4S] cluster. Tyrosine 33 contacts S-adenosyl-L-methionine. Cysteine 34 serves as a coordination point for [4Fe-4S] cluster. Arginine 75 serves as a coordination point for GTP. Residue glycine 79 participates in S-adenosyl-L-methionine binding. Threonine 106 is a binding site for GTP. An S-adenosyl-L-methionine-binding site is contributed by serine 130. Position 167 (lysine 167) interacts with GTP. Methionine 201 is an S-adenosyl-L-methionine binding site. The [4Fe-4S] cluster site is built by cysteine 265 and cysteine 268. 270–272 (RAR) is a binding site for GTP. A [4Fe-4S] cluster-binding site is contributed by cysteine 282.

The protein belongs to the radical SAM superfamily. MoaA family. In terms of assembly, monomer and homodimer. [4Fe-4S] cluster is required as a cofactor.

It carries out the reaction GTP + AH2 + S-adenosyl-L-methionine = (8S)-3',8-cyclo-7,8-dihydroguanosine 5'-triphosphate + 5'-deoxyadenosine + L-methionine + A + H(+). The protein operates within cofactor biosynthesis; molybdopterin biosynthesis. In terms of biological role, catalyzes the cyclization of GTP to (8S)-3',8-cyclo-7,8-dihydroguanosine 5'-triphosphate. This is GTP 3',8-cyclase from Bacillus velezensis (strain DSM 23117 / BGSC 10A6 / LMG 26770 / FZB42) (Bacillus amyloliquefaciens subsp. plantarum).